The chain runs to 473 residues: Sensor histidine kinase YclK (473 aa).

The Cytoplasmic segment spans residues M1–Q9. The chain crosses the membrane as a helical span at residues L10 to S30. Topologically, residues H31 to N164 are extracellular. The helical transmembrane segment at L165 to L185 threads the bilayer. Over S186–Q473 the chain is Cytoplasmic. In terms of domain architecture, HAMP spans K187 to D239. A Histidine kinase domain is found at D254 to A470. H257 bears the Phosphohistidine; by autocatalysis mark.

It localises to the cell membrane. It catalyses the reaction ATP + protein L-histidine = ADP + protein N-phospho-L-histidine.. Could be member of the two-component regulatory system YclK/YclJ. Potentially phosphorylates YclJ. The chain is Sensor histidine kinase YclK (yclK) from Bacillus subtilis (strain 168).